We begin with the raw amino-acid sequence, 266 residues long: Sec-independent protein translocase protein TatC (266 aa).

6 consecutive transmembrane segments (helical) span residues methionine 28 to phenylalanine 48, phenylalanine 93 to phenylalanine 113, glycine 134 to leucine 154, leucine 183 to phenylalanine 203, histidine 221 to threonine 241, and isoleucine 242 to valine 262.

It belongs to the TatC family. Forms a complex with TatA.

It localises to the cell inner membrane. Functionally, part of the twin-arginine translocation (Tat) system that transports large folded proteins containing a characteristic twin-arginine motif in their signal peptide across membranes. In Blattabacterium sp. subsp. Periplaneta americana (strain BPLAN) (Periplaneta americana symbiotic bacterium), this protein is Sec-independent protein translocase protein TatC.